A 164-amino-acid polypeptide reads, in one-letter code: MRLTSKGRYAVTAMLDVALHSQDGPVPLADISERQGISLSYLEQLFSRLRKNGLVASVRGPGGGYLLGKDASAIAVGAVITAVDESVDATRCQGKEGCQGGDRCLTHTLWRDLSERISSFLNNITLAELVNNQDILEVADRQNNDTRRTANGRPQETINVNLRA.

Residues 2 to 131 (RLTSKGRYAV…NNITLAELVN (130 aa)) form the HTH rrf2-type domain. Positions 28 to 51 (LADISERQGISLSYLEQLFSRLRK) form a DNA-binding region, H-T-H motif. [2Fe-2S] cluster contacts are provided by cysteine 92, cysteine 98, and cysteine 104. Residues 143 to 164 (NNDTRRTANGRPQETINVNLRA) form a disordered region. The span at 152–164 (GRPQETINVNLRA) shows a compositional bias: polar residues.

[2Fe-2S] cluster serves as cofactor.

In terms of biological role, regulates the transcription of several operons and genes involved in the biogenesis of Fe-S clusters and Fe-S-containing proteins. This chain is HTH-type transcriptional regulator IscR, found in Yersinia enterocolitica serotype O:8 / biotype 1B (strain NCTC 13174 / 8081).